We begin with the raw amino-acid sequence, 473 residues long: Photosystem II CP43 reaction center protein (473 aa).

The propeptide occupies Met1–Glu14. N-acetylthreonine is present on Thr15. Thr15 carries the phosphothreonine modification. A run of 5 helical transmembrane segments spans residues Leu69 to Ala93, Leu134 to Asn155, Lys178 to Thr200, Lys255 to Ser275, and Trp291 to Ala312. Glu367 lines the [CaMn4O5] cluster pocket. The helical transmembrane segment at Arg447–Pro471 threads the bilayer.

This sequence belongs to the PsbB/PsbC family. PsbC subfamily. In terms of assembly, PSII is composed of 1 copy each of membrane proteins PsbA, PsbB, PsbC, PsbD, PsbE, PsbF, PsbH, PsbI, PsbJ, PsbK, PsbL, PsbM, PsbT, PsbX, PsbY, PsbZ, Psb30/Ycf12, at least 3 peripheral proteins of the oxygen-evolving complex and a large number of cofactors. It forms dimeric complexes. The cofactor is Binds multiple chlorophylls and provides some of the ligands for the Ca-4Mn-5O cluster of the oxygen-evolving complex. It may also provide a ligand for a Cl- that is required for oxygen evolution. PSII binds additional chlorophylls, carotenoids and specific lipids..

It is found in the plastid. The protein localises to the chloroplast thylakoid membrane. Its function is as follows. One of the components of the core complex of photosystem II (PSII). It binds chlorophyll and helps catalyze the primary light-induced photochemical processes of PSII. PSII is a light-driven water:plastoquinone oxidoreductase, using light energy to abstract electrons from H(2)O, generating O(2) and a proton gradient subsequently used for ATP formation. The protein is Photosystem II CP43 reaction center protein of Phaseolus vulgaris (Kidney bean).